We begin with the raw amino-acid sequence, 125 residues long: Small ribosomal subunit protein uS12 (125 aa).

3-methylthioaspartic acid is present on Asp-89.

It belongs to the universal ribosomal protein uS12 family. Part of the 30S ribosomal subunit. Contacts proteins S8 and S17. May interact with IF1 in the 30S initiation complex.

Functionally, with S4 and S5 plays an important role in translational accuracy. Its function is as follows. Interacts with and stabilizes bases of the 16S rRNA that are involved in tRNA selection in the A site and with the mRNA backbone. Located at the interface of the 30S and 50S subunits, it traverses the body of the 30S subunit contacting proteins on the other side and probably holding the rRNA structure together. The combined cluster of proteins S8, S12 and S17 appears to hold together the shoulder and platform of the 30S subunit. The chain is Small ribosomal subunit protein uS12 from Clostridium novyi (strain NT).